Consider the following 570-residue polypeptide: piRNA biogenesis protein EXD1 (570 aa).

The 173-residue stretch at 135 to 307 (YTVIDQFQQK…LPPSLLKILA (173 aa)) folds into the 3'-5' exonuclease domain. Basic and acidic residues-rich tracts occupy residues 433–442 (DEKFLDKESK) and 453–465 (PRKEGEAHKDSKN). A disordered region spans residues 433–485 (DEKFLDKESKQTTAKSQIVPPRKEGEAHKDSKNKPGCWESAGPEDPRAQKAHA).

It belongs to the EXD1 family. As to quaternary structure, homodimer. Component of the PET complex, at least composed of EXD1, PIWIL2, TDRD12 and piRNAs.

The protein resides in the cytoplasm. In terms of biological role, RNA-binding component of the PET complex, a multiprotein complex required for the processing of piRNAs during spermatogenesis. The piRNA metabolic process mediates the repression of transposable elements during meiosis by forming complexes composed of piRNAs and Piwi proteins and governs the methylation and subsequent repression of transposable elements, preventing their mobilization, which is essential for the germline integrity. The PET complex is required during the secondary piRNAs metabolic process for the PIWIL2 slicing-triggered loading of PIWIL4 piRNAs. In the PET complex, EXD1 probably acts as an RNA adapter. EXD1 is an inactive exonuclease. This is piRNA biogenesis protein EXD1 (Exd1) from Mus musculus (Mouse).